A 358-amino-acid chain; its full sequence is 3-isopropylmalate dehydrogenase (358 aa).

Residues Arg-92, Arg-102, Arg-130, and Asp-224 each coordinate substrate. Mg(2+)-binding residues include Asp-224, Asp-248, and Asp-252. 282–294 (GSAPDIAGQGIAN) contacts NAD(+).

Belongs to the isocitrate and isopropylmalate dehydrogenases family. LeuB type 1 subfamily. Homodimer. Mg(2+) is required as a cofactor. It depends on Mn(2+) as a cofactor.

It is found in the cytoplasm. It catalyses the reaction (2R,3S)-3-isopropylmalate + NAD(+) = 4-methyl-2-oxopentanoate + CO2 + NADH. Its pathway is amino-acid biosynthesis; L-leucine biosynthesis; L-leucine from 3-methyl-2-oxobutanoate: step 3/4. Its function is as follows. Catalyzes the oxidation of 3-carboxy-2-hydroxy-4-methylpentanoate (3-isopropylmalate) to 3-carboxy-4-methyl-2-oxopentanoate. The product decarboxylates to 4-methyl-2 oxopentanoate. The polypeptide is 3-isopropylmalate dehydrogenase (Bordetella parapertussis (strain 12822 / ATCC BAA-587 / NCTC 13253)).